The sequence spans 373 residues: MSKFKSLLLLFGSLILLSGCSNVEVLNPKGPMASDSKFLIMYSIIFMLVIIAAVLILFTVFLYKYRIGNTDESGKMHHNSLLETIWFIIPVIIVIALAIPTVNSLYNYEEKPQKEDDPLVVYATSAGYKWFFSYPEEKIETVNHLTIPKDRPVVFKLQSMDMMTSFWIPQLGGQKYAMTGMTMDWTLTASEEGTFRGRNSNFNGEGFSRQTFDVNSVSQSKFEDWVKDAKKQKVLDQDTFDKQLLPTTENKNLTFSGTHLAFVDPAADPEYIFYAYDRYNFVQKDPNFNTEEERTADVLDKPDQPARKPEITNANYERHGMKAMILGNNEPYDSEFKDEESHNMDEMEKISEGAKDEKASKIEKKDHENGGGH.

Residues 1-19 (MSKFKSLLLLFGSLILLSG) form the signal peptide. Cys20 is lipidated: N-palmitoyl cysteine. The S-diacylglycerol cysteine moiety is linked to residue Cys20. 2 consecutive transmembrane segments (helical) span residues 38–58 (FLIM…LILF) and 82–102 (LETI…IPTV). 2 stretches are compositionally biased toward basic and acidic residues: residues 292–320 (EERT…ERHG) and 339–373 (EESH…GGGH). The tract at residues 292–373 (EERTADVLDK…KKDHENGGGH (82 aa)) is disordered.

Belongs to the cytochrome c oxidase subunit 2 family.

It localises to the cell membrane. The enzyme catalyses 2 a quinol + O2 = 2 a quinone + 2 H2O. Functionally, catalyzes quinol oxidation with the concomitant reduction of oxygen to water. Subunit II transfers the electrons from a quinol to the binuclear center of the catalytic subunit I. This chain is Probable quinol oxidase subunit 2 (qoxA), found in Staphylococcus saprophyticus subsp. saprophyticus (strain ATCC 15305 / DSM 20229 / NCIMB 8711 / NCTC 7292 / S-41).